A 152-amino-acid chain; its full sequence is ESAT-6 secretion machinery protein EssA (152 aa).

Over 1–114 (MLMNSVIALT…PYIQNKQEKK (114 aa)) the chain is Cytoplasmic. The helical transmembrane segment at 115–135 (IFPYILMSVGAFLTLGFVIFS) threads the bilayer. Residues 136 to 152 (IHKGRRTKNESARKSNI) lie on the Extracellular side of the membrane.

The protein belongs to the EssA family.

The protein localises to the cell membrane. Component of the ESAT-6 secretion system (Ess). Required for the secretion of EsxA and EsxB. This chain is ESAT-6 secretion machinery protein EssA, found in Staphylococcus aureus (strain Mu50 / ATCC 700699).